Reading from the N-terminus, the 746-residue chain is MAGFKRGYDGKIAGLYDLDKTLGRGHFAVVKLARHVFTGEKVAVKVIDKTKLDTLATGHLFQEVRCMKLVQHPNIVRLYEVIDTQTKLYLILELGDGGDMFDYIMKHEEGLNEDLAKKYFAQIVHAISYCHKLHVVHRDLKPENVVFFEKQGLVKLTDFGFSNKFQPGKKLTTSCGSLAYSAPEILLGDEYDAPAVDIWSLGVILFMLVCGQPPFQEANDSETLTMIMDCKYTVPPRVSAGCRDLITRMLQRDPKRRASLEEIESHPWLQGVDPSPATKYNIPLVSYKNLSEEEHNSIIQRMVLGDIADRDAIVEALETNRYNHITATYFLLAERILREKQEKEIQTRSASPSNIKAQFRQSWPTKIDVPQDLEDDLTATPLSHATVPQSPARAGDSVLNGHRSKGLCDPAKKDELPELAGPALSTVPPASLKPAASGRKCLFRVEEDEEEDEEDKKPVSLSTQVVLRRKPSVTNRLTSRKSAPVLNQIFEEGESDDEFDMDENLPPKLSRLKMNIASPGTVHKRYHRRKSQGRGSSCSSSETSDDDSESRRRLDKDSGLAYSWHRRDSSEGPPGSEGDGGGQSKPSGGGGVDKASPGEQGTGGSGQGGSGGTPSGTAGSSRRCAGPDSSSSSPASAAPRGAELVQSLKLVSLCLGSQLHGAKYILDPQKALLSSVKVQERSTWKMCISAPGPGPSADLDPVRTKKLRNNVLQLPLCEKTISVNIQRSRKEGLLCASSPASCCHVI.

The region spanning 16–269 (YDLDKTLGRG…LEEIESHPWL (254 aa)) is the Protein kinase domain. Residues 22–30 (LGRGHFAVV) and K45 contribute to the ATP site. D139 (proton acceptor) is an active-site residue. S162 carries the phosphoserine modification. T173 is subject to Phosphothreonine; by LKB1. A UBA domain is found at 291–334 (SEEEHNSIIQRMVLGDIADRDAIVEALETNRYNHITATYFLLAE). 5 positions are modified to phosphoserine: S362, S390, S482, S495, and S518. The interval 383 to 414 (SHATVPQSPARAGDSVLNGHRSKGLCDPAKKD) is disordered. Acidic residues predominate over residues 494–503 (ESDDEFDMDE). Residues 494–638 (ESDDEFDMDE…SSSSSPASAA (145 aa)) are disordered. Basic residues predominate over residues 522-532 (VHKRYHRRKSQ). Low complexity predominate over residues 533 to 542 (GRGSSCSSSE). The residue at position 534 (R534) is an Omega-N-methylarginine. Residues 549–558 (ESRRRLDKDS) are compositionally biased toward basic and acidic residues. Composition is skewed to gly residues over residues 575-592 (GSEG…GGGV) and 600-614 (QGTG…GGTP). Positions 615–638 (SGTAGSSRRCAGPDSSSSSPASAA) are enriched in low complexity.

The protein belongs to the protein kinase superfamily. CAMK Ser/Thr protein kinase family. The cofactor is Mg(2+). Autophosphorylated. Phosphorylation on Thr-173 by STK11/LKB1 in complex with STE20-related adapter-alpha (STRADA) pseudo kinase and CAB39. As to expression, ubiquitously expressed in all tissues examined with highest levels in the brain and testis. Strongly expressed in the pyramidal and granule neurons of the hippocampus and also in the cerebellum.

It localises to the nucleus. It catalyses the reaction L-seryl-[protein] + ATP = O-phospho-L-seryl-[protein] + ADP + H(+). It carries out the reaction L-threonyl-[protein] + ATP = O-phospho-L-threonyl-[protein] + ADP + H(+). Its activity is regulated as follows. Activated by phosphorylation on Thr-173. Functionally, may play a role in hematopoietic cell proliferation or differentiation. Potential mediator of neuronal apoptosis. This is SNF-related serine/threonine-protein kinase from Rattus norvegicus (Rat).